The chain runs to 186 residues: PRKR-interacting protein 1 (186 aa).

The interval 1-50 (MASSAASSVRPPRPKKEPQALIIPKNAAEEQKLKLERLMKNPDKAVPIPE) is interaction with EIF2AK2. Disordered regions lie at residues 39-61 (MKNP…RPPP) and 119-186 (AAEE…ITGR). The tract at residues 51–143 (KMSEWAPRPP…LKEKKLLAKK (93 aa)) is required for RNA-binding. Residues 86–153 (RRREYQRQDY…MKLEQKKQSE (68 aa)) adopt a coiled-coil conformation. Residues 126–138 (KRRKKRQKLKEKK) form a required for nuclear localization region. Basic residues predominate over residues 126-143 (KRRKKRQKLKEKKLLAKK). A compositionally biased stretch (polar residues) spans 153–162 (EASSETQEQP). A compositionally biased stretch (acidic residues) spans 170–179 (SGTEDEEEDA).

Belongs to the PRKRIP1 family. As to quaternary structure, component of the pre-catalytic and post-catalytic spliceosome complexes. Interacts with EIF2AK2.

It is found in the nucleus. The protein resides in the nucleolus. Required for pre-mRNA splicing as component of the spliceosome. Binds double-stranded RNA. Inhibits EIF2AK2 kinase activity. The chain is PRKR-interacting protein 1 (PRKRIP1) from Bos taurus (Bovine).